Here is a 638-residue protein sequence, read N- to C-terminus: Threonine--tRNA ligase (638 aa).

The 61-residue stretch at 1–61 folds into the TGS domain; that stretch reads MPIITLPDGS…NKDSKVVIIT (61 aa). Residues 242 to 533 form a catalytic region; it reads DHRKLGKKHS…LIEQYEAKFP (292 aa). C333, H384, and H510 together coordinate Zn(2+).

It belongs to the class-II aminoacyl-tRNA synthetase family. In terms of assembly, homodimer. It depends on Zn(2+) as a cofactor.

It localises to the cytoplasm. The catalysed reaction is tRNA(Thr) + L-threonine + ATP = L-threonyl-tRNA(Thr) + AMP + diphosphate + H(+). Functionally, catalyzes the attachment of threonine to tRNA(Thr) in a two-step reaction: L-threonine is first activated by ATP to form Thr-AMP and then transferred to the acceptor end of tRNA(Thr). Also edits incorrectly charged L-seryl-tRNA(Thr). This is Threonine--tRNA ligase from Prochlorococcus marinus (strain AS9601).